A 428-amino-acid polypeptide reads, in one-letter code: Citrate synthase (428 aa).

Active-site residues include His-265, His-306, and Asp-363.

This sequence belongs to the citrate synthase family. As to quaternary structure, homohexamer.

The enzyme catalyses oxaloacetate + acetyl-CoA + H2O = citrate + CoA + H(+). Its pathway is carbohydrate metabolism; tricarboxylic acid cycle; isocitrate from oxaloacetate: step 1/2. Its activity is regulated as follows. Allosterically inhibited by NADH. This is Citrate synthase (gltA) from Pseudomonas aeruginosa (strain ATCC 15692 / DSM 22644 / CIP 104116 / JCM 14847 / LMG 12228 / 1C / PRS 101 / PAO1).